We begin with the raw amino-acid sequence, 602 residues long: DEAD-box ATP-dependent RNA helicase 52A (602 aa).

The tract at residues 9–31 (KSVEAGGEPGGGGGGAWSTVSRS) is disordered. The segment covering 15-24 (GEPGGGGGGA) has biased composition (gly residues). The Q motif signature appears at 84 to 112 (DGFEAAGLVEAVLRNVARCGYESPTPVQR). The Helicase ATP-binding domain maps to 115-305 (MPIALAGRDL…SDFLSNYIFI (191 aa)). Residue 128-135 (AQTGSGKT) coordinates ATP. Positions 249-252 (DEAD) match the DEAD box motif. One can recognise a Helicase C-terminal domain in the interval 328 to 485 (EKRGYLLDLL…DVPDWLVQYA (158 aa)). 2 disordered regions span residues 492 to 521 (GSSY…SGGG) and 552 to 602 (RGGG…SGWD). Residues 552–574 (RGGGYSRGGRGGYSGGGGGGGGD) show a composition bias toward gly residues.

This sequence belongs to the DEAD box helicase family. DDX3/DED1 subfamily.

The enzyme catalyses ATP + H2O = ADP + phosphate + H(+). This is DEAD-box ATP-dependent RNA helicase 52A from Oryza sativa subsp. japonica (Rice).